A 405-amino-acid chain; its full sequence is tRNA (uracil(54)-C(5))-methyltransferase (405 aa).

[4Fe-4S] cluster contacts are provided by Cys61, Cys67, Cys70, and Cys137. S-adenosyl-L-methionine is bound by residues Gln252, Tyr278, Thr283, 299–300 (DS), Asp326, and Asp340. Cys367 acts as the Nucleophile in catalysis. Glu399 functions as the Proton acceptor in the catalytic mechanism.

The protein belongs to the class I-like SAM-binding methyltransferase superfamily. RNA M5U methyltransferase family.

The catalysed reaction is uridine(54) in tRNA + S-adenosyl-L-methionine = 5-methyluridine(54) in tRNA + S-adenosyl-L-homocysteine + H(+). Activated by magnesium ions. Its function is as follows. Catalyzes the formation of 5-methyl-uridine at position 54 (m5U54) in tRNA. This chain is tRNA (uracil(54)-C(5))-methyltransferase, found in Pyrococcus abyssi (strain GE5 / Orsay).